Reading from the N-terminus, the 353-residue chain is O-antigen chain mannosyltransferase RfbU (353 aa).

The protein belongs to the glycosyltransferase group 1 family. Glycosyltransferase 4 subfamily.

It catalyses the reaction alpha-L-rhamnosyl-(1-&gt;3)-alpha-D-galactosyl-1-diphospho-di-trans,octa-cis-undecaprenol + GDP-alpha-D-mannose = alpha-D-Man-(1-&gt;4)-alpha-L-Rha-(1-&gt;3)-alpha-D-Gal-di-trans,octa-cis-undecaprenyl diphosphate + GDP + H(+). It functions in the pathway bacterial outer membrane biogenesis; LPS O-antigen biosynthesis. Mannosyltransferase involved in the biosynthesis of the repeat unit of the lipopolysaccharide (LPS) O-antigen region. Catalyzes the addition of a mannose to the rhamnosyl-galactosyl-undecaprenyl diphosphate intermediate. The chain is O-antigen chain mannosyltransferase RfbU from Salmonella typhimurium (strain LT2 / SGSC1412 / ATCC 700720).